The following is a 198-amino-acid chain: Holliday junction branch migration complex subunit RuvA (198 aa).

Positions 1-63 are domain I; that stretch reads MYDYIKGQLT…EDAHLLFGFH (63 aa). The domain II stretch occupies residues 64 to 142; it reads TEDEKDVFLK…EAPQETGNTK (79 aa). Residues 143–147 form a flexible linker region; the sequence is ARSNK. The segment at 148–198 is domain III; it reads AGNTQLDEAIEALLALGYKATELKKIRAFFEGTSETAEQYIKSALKLLMKG.

Belongs to the RuvA family. In terms of assembly, homotetramer. Forms an RuvA(8)-RuvB(12)-Holliday junction (HJ) complex. HJ DNA is sandwiched between 2 RuvA tetramers; dsDNA enters through RuvA and exits via RuvB. An RuvB hexamer assembles on each DNA strand where it exits the tetramer. Each RuvB hexamer is contacted by two RuvA subunits (via domain III) on 2 adjacent RuvB subunits; this complex drives branch migration. In the full resolvosome a probable DNA-RuvA(4)-RuvB(12)-RuvC(2) complex forms which resolves the HJ.

The protein localises to the cytoplasm. In terms of biological role, the RuvA-RuvB-RuvC complex processes Holliday junction (HJ) DNA during genetic recombination and DNA repair, while the RuvA-RuvB complex plays an important role in the rescue of blocked DNA replication forks via replication fork reversal (RFR). RuvA specifically binds to HJ cruciform DNA, conferring on it an open structure. The RuvB hexamer acts as an ATP-dependent pump, pulling dsDNA into and through the RuvAB complex. HJ branch migration allows RuvC to scan DNA until it finds its consensus sequence, where it cleaves and resolves the cruciform DNA. This Streptococcus pyogenes serotype M12 (strain MGAS2096) protein is Holliday junction branch migration complex subunit RuvA.